A 245-amino-acid polypeptide reads, in one-letter code: GDSL esterase/lipase At4g16220 (245 aa).

The first 24 residues, 1-24, serve as a signal peptide directing secretion; sequence MSSLVSRCQVIALLVLFFFGVCLA. The Nucleophile role is filled by Ser37.

Belongs to the 'GDSL' lipolytic enzyme family.

It is found in the secreted. This Arabidopsis thaliana (Mouse-ear cress) protein is GDSL esterase/lipase At4g16220.